The chain runs to 490 residues: B3 domain-containing protein REM14 (490 aa).

DNA-binding regions (TF-B3) lie at residues 3 to 95 (NQHF…LGPS), 130 to 226 (CFSA…LPKG), and 236 to 333 (CFVA…LSNE). The segment at 343-367 (NEVESLSTDQESHEESSHNEKISRR) is disordered. Basic and acidic residues predominate over residues 352–364 (QESHEESSHNEKI). The TF-B3 4 DNA-binding region spans 387–484 (FVTLNLTPYN…TSCVLKFCSK (98 aa)).

The protein localises to the nucleus. This chain is B3 domain-containing protein REM14 (REM14), found in Arabidopsis thaliana (Mouse-ear cress).